We begin with the raw amino-acid sequence, 110 residues long: Serum amyloid A protein (110 aa).

The tract at residues 73-110 is disordered; it reads GGSGRGAEDSRADQAANEWGRSGKDPNHFRPHGLPDKY. Over residues 93 to 110 the composition is skewed to basic and acidic residues; that stretch reads RSGKDPNHFRPHGLPDKY.

It belongs to the SAA family. Post-translationally, this protein is the precursor of amyloid protein A, which is formed by the removal of residues from the C-terminal end. Expressed by the liver; secreted in plasma.

In terms of biological role, major acute phase reactant. Apolipoprotein of the HDL complex. In Equus caballus (Horse), this protein is Serum amyloid A protein (SAA1).